The following is a 508-amino-acid chain: Steroid 17-alpha-hydroxylase/17,20 lyase (508 aa).

Cys-442 serves as a coordination point for heme.

Belongs to the cytochrome P450 family. Requires heme as cofactor.

The protein resides in the endoplasmic reticulum membrane. Its subcellular location is the microsome membrane. It carries out the reaction a C21-steroid + reduced [NADPH--hemoprotein reductase] + O2 = a 17alpha-hydroxy-C21-steroid + oxidized [NADPH--hemoprotein reductase] + H2O + H(+). The catalysed reaction is progesterone + reduced [NADPH--hemoprotein reductase] + O2 = 17alpha-hydroxyprogesterone + oxidized [NADPH--hemoprotein reductase] + H2O + H(+). It catalyses the reaction pregnenolone + reduced [NADPH--hemoprotein reductase] + O2 = 17alpha-hydroxypregnenolone + oxidized [NADPH--hemoprotein reductase] + H2O + H(+). The enzyme catalyses 17alpha-hydroxyprogesterone + reduced [NADPH--hemoprotein reductase] + O2 = androst-4-ene-3,17-dione + acetate + oxidized [NADPH--hemoprotein reductase] + H2O + 2 H(+). It carries out the reaction 17alpha-hydroxyprogesterone + reduced [NADPH--hemoprotein reductase] + O2 = 16alpha,17alpha-dihydroxyprogesterone + oxidized [NADPH--hemoprotein reductase] + H2O + H(+). The catalysed reaction is 16alpha,17alpha-dihydroxyprogesterone + reduced [NADPH--hemoprotein reductase] + O2 = 6beta,16alpha,17alpha-trihydroxyprogesterone + oxidized [NADPH--hemoprotein reductase] + H2O + H(+). It catalyses the reaction 17alpha-hydroxypregnenolone + reduced [NADPH--hemoprotein reductase] + O2 = 3beta-hydroxyandrost-5-en-17-one + acetate + oxidized [NADPH--hemoprotein reductase] + H2O + 2 H(+). The enzyme catalyses 16alpha,17alpha-dihydroxypregnenolone + reduced [NADPH--hemoprotein reductase] + O2 = 3beta,16alpha-dihydroxy-androst-5-en-17-one + acetate + oxidized [NADPH--hemoprotein reductase] + H2O + 2 H(+). It carries out the reaction 3beta-hydroxyandrost-5-en-17-one + reduced [NADPH--hemoprotein reductase] + O2 = 3beta,16alpha-dihydroxy-androst-5-en-17-one + oxidized [NADPH--hemoprotein reductase] + H2O + H(+). The catalysed reaction is androst-4-ene-3,17-dione + reduced [NADPH--hemoprotein reductase] + O2 = 16alpha-hydroxyandrost-4-ene-3,17-dione + oxidized [NADPH--hemoprotein reductase] + H2O + H(+). Its pathway is steroid hormone biosynthesis. The protein operates within steroid biosynthesis; glucocorticoid biosynthesis. Regulated predominantly by intracellular cAMP levels. The 17,20-lyase activity is stimulated by cytochrome b5, which acts as an allosteric effector increasing the Vmax of the lyase activity. A cytochrome P450 monooxygenase involved in corticoid and androgen biosynthesis. Catalyzes 17-alpha hydroxylation of C21 steroids, which is common for both pathways. A second oxidative step, required only for androgen synthesis, involves an acyl-carbon cleavage. The 17-alpha hydroxy intermediates, as part of adrenal glucocorticoids biosynthesis pathway, are precursors of cortisol. Hydroxylates steroid hormones, pregnenolone and progesterone to form 17-alpha hydroxy metabolites, followed by the cleavage of the C17-C20 bond to form C19 steroids, dehydroepiandrosterone (DHEA) and androstenedione. Has 16-alpha hydroxylase activity. Catalyzes 16-alpha hydroxylation of 17-alpha hydroxy pregnenolone, followed by the cleavage of the C17-C20 bond to form 16-alpha-hydroxy DHEA. Also 16-alpha hydroxylates androgens, relevant for estriol synthesis. Mechanistically, uses molecular oxygen inserting one oxygen atom into a substrate, and reducing the second into a water molecule, with two electrons provided by NADPH via cytochrome P450 reductase (CPR; NADPH-ferrihemoprotein reductase). This chain is Steroid 17-alpha-hydroxylase/17,20 lyase (CYP17A1), found in Equus caballus (Horse).